The following is a 442-amino-acid chain: GTPase Der (442 aa).

EngA-type G domains are found at residues 4–169 and 178–353; these read PIVA…PENN and IKIA…EQAT. Residues 10 to 17, 57 to 61, 121 to 124, 184 to 191, 231 to 235, and 296 to 299 contribute to the GTP site; these read GRPNVGKS, DTGGL, NKIE, DTAGM, and NKWD. The region spanning 354–438 is the KH-like domain; sequence RRISTSVLNE…PMRFFIRERE (85 aa).

Belongs to the TRAFAC class TrmE-Era-EngA-EngB-Septin-like GTPase superfamily. EngA (Der) GTPase family. In terms of assembly, associates with the 50S ribosomal subunit.

GTPase that plays an essential role in the late steps of ribosome biogenesis. The chain is GTPase Der from Heliobacterium modesticaldum (strain ATCC 51547 / Ice1).